The primary structure comprises 1025 residues: MKFFALFIYRPVATILLSVAITLCGILGFRMLPVAPLPQVDFPVIMVSASLPGASPETMASSVATPLERSLGRIAGVSEMTSSSSLGSTRIILQFDFDRDINGAARDVQAAINAAQSLLPSGMPSRPTYRKANPSDAPIMILTLTSDTYSQGELYDFASTQLAPTISQIDGVGDVDVGGSSLPAVRVGLNPQALFNQGVSLDDVRTAISNANVRKPQGALEDGTHRWQIQTNDELKTAAEYQPLIIHYNNGGAVRLGDVATVTDSVQDVRNAGMTNAKPAILLMIRKLPEANIIQTVDSIRAKLPELQETIPAAIDLQIAQDRSPTIRASLEEVEQTLIISVALVILVVFLFLRSGRATIIPAVSVPVSLIGTFAAMYLCGFSLNNLSLMALTIATGFVVDDAIVVLENIARHLEAGMKPLQAALQGTREVGFTVLSMSLSLVAVFLPLLLMGGLPGRLLREFAVTLSVAIGISLLVSLTLTPMMCGWMLKASKPREQKRLRGFGRMLVALQQGYGKSLKWVLNHTRLVGVVLLGTIALNIWLYISIPKTFFPEQDTGVLMGGIQADQSISFQAMRGKLQDFMKIIRDDPAVDNVTGFTGGSRVNSGMMFITLKPRDERSETAQQIIDRLRVKLAKEPGANLFLMAVQDIRVGGRQSNASYQYTLLSDDLAALREWEPKIRKKLATLPELADVNSDQQDNGAEMNLVYDRDTMARLGIDVQAANSLLNNAFGQRQISTIYQPMNQYKVVMEVDPRYTQDISALEKMFVINNEGKAIPLSYFAKWQPANAPLSVNHQGLSAASTISFNLPTGKSLSDASAAIDRAMTQLGVPSTVRGSFAGTAQVFQETMNSQVILIIAAIATVYIVLGILYESYVHPLTILSTLPSAGVGALLALELFNAPFSLIALIGIMLLIGIVKKNAIMMVDFALEAQRHGNLTPQEAIFQACLLRFRPIMMTTLAALFGALPLVLSGGDGSELRHPLGITIVGGLVMSQLLTLYTTPVVYLFFDRLRLRFSRKPKQTVTE.

The next 12 helical transmembrane spans lie at Phe3–Leu23, Glu333–Leu353, Ile360–Cys380, Leu387–Leu407, Val431–Leu451, Phe463–Pro483, Leu528–Pro548, Val853–Ser873, Val875–Leu895, Leu897–Val917, Pro953–Gly973, and Ile984–Val1004.

This sequence belongs to the resistance-nodulation-cell division (RND) (TC 2.A.6) family. MdtC subfamily. Part of a tripartite efflux system composed of MdtA, MdtB and MdtC. MdtC forms a heteromultimer with MdtB.

Its subcellular location is the cell inner membrane. In Shigella sonnei (strain Ss046), this protein is Multidrug resistance protein MdtC.